A 103-amino-acid polypeptide reads, in one-letter code: Regulator of rDNA transcription protein 1 (103 aa).

Transmembrane regions (helical) follow at residues 9 to 33 (FLPSILIGYISIRVSLLVWVNWVLV) and 40 to 57 (VAFIFSLWYFILSIYTFF).

The protein resides in the membrane. Identified in a screen for mutants with decreased levels of rDNA transcription. The protein is Regulator of rDNA transcription protein 1 (RRT1) of Saccharomyces cerevisiae (strain ATCC 204508 / S288c) (Baker's yeast).